Here is a 70-residue protein sequence, read N- to C-terminus: Large ribosomal subunit protein bL32c (70 aa).

Disordered regions lie at residues 1–20 and 51–70; these read MAVPKKRTSRSKKKIRKNVR and NDDSSGSSESKLTAIDLDDP. A compositionally biased stretch (polar residues) spans 52-61; that stretch reads DDSSGSSESK.

This sequence belongs to the bacterial ribosomal protein bL32 family.

The protein resides in the plastid. The protein localises to the chloroplast. This chain is Large ribosomal subunit protein bL32c (rpl32), found in Pinus thunbergii (Japanese black pine).